We begin with the raw amino-acid sequence, 541 residues long: Major facilitator-type transporter ecdD (541 aa).

The helical transmembrane segment at A15 to D35 threads the bilayer. A glycan (N-linked (GlcNAc...) asparagine) is linked at N64. 4 helical membrane passes run A72–G92, G106–A126, F129–T149, and G156–L176. 2 N-linked (GlcNAc...) asparagine glycosylation sites follow: N178 and N184. A helical transmembrane segment spans residues I191–P211. A glycan (N-linked (GlcNAc...) asparagine) is linked at N253. Helical transmembrane passes span L277–Y297, V313–I333, P340–G360, I384–V404, S418–L440, and I454–Y474.

Belongs to the major facilitator superfamily. Sugar transporter (TC 2.A.1.1) family.

The protein localises to the membrane. In Aspergillus rugulosus (Emericella rugulosa), this protein is Major facilitator-type transporter ecdD.